Consider the following 507-residue polypeptide: ATP synthase subunit alpha, chloroplastic (507 aa).

Position 170–177 (170–177) interacts with ATP; sequence GDRQTGKT. Threonine 257 carries the post-translational modification Phosphothreonine.

This sequence belongs to the ATPase alpha/beta chains family. As to quaternary structure, F-type ATPases have 2 components, CF(1) - the catalytic core - and CF(0) - the membrane proton channel. CF(1) has five subunits: alpha(3), beta(3), gamma(1), delta(1), epsilon(1). CF(0) has four main subunits: a, b, b' and c.

The protein localises to the plastid. It localises to the chloroplast thylakoid membrane. It carries out the reaction ATP + H2O + 4 H(+)(in) = ADP + phosphate + 5 H(+)(out). Functionally, produces ATP from ADP in the presence of a proton gradient across the membrane. The alpha chain is a regulatory subunit. In Aethionema cordifolium (Lebanon stonecress), this protein is ATP synthase subunit alpha, chloroplastic.